We begin with the raw amino-acid sequence, 300 residues long: Ribosomal protein L11 methyltransferase (300 aa).

T152, G173, D195, and N234 together coordinate S-adenosyl-L-methionine.

This sequence belongs to the methyltransferase superfamily. PrmA family.

It is found in the cytoplasm. The catalysed reaction is L-lysyl-[protein] + 3 S-adenosyl-L-methionine = N(6),N(6),N(6)-trimethyl-L-lysyl-[protein] + 3 S-adenosyl-L-homocysteine + 3 H(+). Methylates ribosomal protein L11. In Burkholderia ambifaria (strain MC40-6), this protein is Ribosomal protein L11 methyltransferase.